The primary structure comprises 520 residues: Bifunctional purine biosynthesis protein PurH (520 aa).

The region spanning 1–147 (MAKIGRALIS…KNNRDVTVVV (147 aa)) is the MGS-like domain.

Belongs to the PurH family.

It catalyses the reaction (6R)-10-formyltetrahydrofolate + 5-amino-1-(5-phospho-beta-D-ribosyl)imidazole-4-carboxamide = 5-formamido-1-(5-phospho-D-ribosyl)imidazole-4-carboxamide + (6S)-5,6,7,8-tetrahydrofolate. It carries out the reaction IMP + H2O = 5-formamido-1-(5-phospho-D-ribosyl)imidazole-4-carboxamide. Its pathway is purine metabolism; IMP biosynthesis via de novo pathway; 5-formamido-1-(5-phospho-D-ribosyl)imidazole-4-carboxamide from 5-amino-1-(5-phospho-D-ribosyl)imidazole-4-carboxamide (10-formyl THF route): step 1/1. It functions in the pathway purine metabolism; IMP biosynthesis via de novo pathway; IMP from 5-formamido-1-(5-phospho-D-ribosyl)imidazole-4-carboxamide: step 1/1. The protein is Bifunctional purine biosynthesis protein PurH of Citrifermentans bemidjiense (strain ATCC BAA-1014 / DSM 16622 / JCM 12645 / Bem) (Geobacter bemidjiensis).